Consider the following 328-residue polypeptide: Malate dehydrogenase (328 aa).

Position 12–18 (12–18) interacts with NAD(+); it reads GAAGQIG. Substrate is bound by residues Arg-93 and Arg-99. NAD(+)-binding positions include Asn-106, Gln-113, and 130-132; that span reads VGN. 2 residues coordinate substrate: Asn-132 and Arg-166. His-191 serves as the catalytic Proton acceptor.

It belongs to the LDH/MDH superfamily. MDH type 2 family.

It carries out the reaction (S)-malate + NAD(+) = oxaloacetate + NADH + H(+). In terms of biological role, catalyzes the reversible oxidation of malate to oxaloacetate. This chain is Malate dehydrogenase, found in Dechloromonas aromatica (strain RCB).